A 467-amino-acid chain; its full sequence is MTNWQGKNVTVAGLGVSGIPAARVLHGLGAVVTVVNDGDDERSRAQAADLEALGITVRLGDGATLPEGTELIVTTPGWQPDKPLFAAAAEAGVPVWGDVELAWRLRGPGSAPWLAVTGTNGKTTTVQMLASILTAAGLRTAAVGNIGVSLLDAVLGEETYDVLAVELSSYQLHWAPSLRAHSATVLNIAPDHLDWHGSMEAYTADKGRIYEGNRVACVYNVADKATEDLVRAADVEEGCRAVGFTLGTPGPSQLGVVEGILVDRAFVEDRQKNAQELAEVADVHPPAPHNIANALAAAALARAFGVPASAVRDGLRAFRPDAHRIAHVADVDGVTYIDDSKATNTHAAEASLAAYGSIVWIAGGLAKGASFDELVAKSAQRLRGVVLIGADRALIREALARHAPEVPVVDLDRTDTGAMPAAVQEARRLAVAGDTVLLAPACASMDMFANYNKRGDAFAEAVRGLGA.

ATP is bound at residue 118–124; it reads GTNGKTT.

This sequence belongs to the MurCDEF family.

It is found in the cytoplasm. The catalysed reaction is UDP-N-acetyl-alpha-D-muramoyl-L-alanine + D-glutamate + ATP = UDP-N-acetyl-alpha-D-muramoyl-L-alanyl-D-glutamate + ADP + phosphate + H(+). It functions in the pathway cell wall biogenesis; peptidoglycan biosynthesis. Cell wall formation. Catalyzes the addition of glutamate to the nucleotide precursor UDP-N-acetylmuramoyl-L-alanine (UMA). This is UDP-N-acetylmuramoylalanine--D-glutamate ligase from Streptomyces avermitilis (strain ATCC 31267 / DSM 46492 / JCM 5070 / NBRC 14893 / NCIMB 12804 / NRRL 8165 / MA-4680).